The primary structure comprises 175 residues: uncharacterized protein (175 aa).

2 disordered regions span residues 68-111 (NKSN…DDDQ) and 154-175 (PERA…KLTT). Low complexity predominate over residues 95 to 106 (EEQPMMPYQQPP).

This sequence belongs to the asfivirus H171R family.

It is found in the virion. This is an uncharacterized protein from African swine fever virus (isolate Pig/Kenya/KEN-50/1950) (ASFV).